Consider the following 116-residue polypeptide: Venom protein 54.1 (116 aa).

The N-terminal stretch at Met-1–Cys-19 is a signal peptide.

Contains 3 disulfide bonds. In terms of tissue distribution, expressed by the venom gland.

The protein localises to the secreted. This is Venom protein 54.1 from Lychas mucronatus (Chinese swimming scorpion).